The sequence spans 354 residues: uncharacterized protein (354 aa).

A signal peptide spans 1–21 (MFQKKTYAVFLILLLMMFTAA). Residue Cys-22 is the site of N-palmitoyl cysteine attachment. Residue Cys-22 is the site of S-diacylglycerol cysteine attachment.

The protein localises to the cell membrane. Its subcellular location is the membrane raft. This is an uncharacterized protein from Bacillus subtilis (strain 168).